The sequence spans 431 residues: tRNA (adenine(37)-N6)-methyltransferase (431 aa).

The 139-residue stretch at 30 to 168 (TEPIGYLESC…YIADYDSPQN (139 aa)) folds into the TsaA-like domain. S-adenosyl-L-methionine-binding positions include 47-49 (PRQ), 90-91 (HK), R117, L127, and 148-151 (IHGT). Disordered regions lie at residues 167–189 (QNLE…ATAN) and 201–243 (KAQP…DRER). Over residues 207–243 (STKEKPKCREHRTSDENSQKFRDTSEIQHTLPEDRER) the composition is skewed to basic and acidic residues.

This sequence belongs to the tRNA methyltransferase O family.

The catalysed reaction is N(6)-L-threonylcarbamoyladenosine(37) in tRNA + S-adenosyl-L-methionine = N(6)-methyl,N(6)-L-threonylcarbamoyladenosine(37) in tRNA + S-adenosyl-L-homocysteine + H(+). Its function is as follows. S-adenosyl-L-methionine-dependent methyltransferase responsible for the addition of the methyl group in the formation of N6-methyl-N6-threonylcarbamoyladenosine at position 37 (m(6)t(6)A37) of the tRNA anticodon loop of tRNA(Ser)(GCU). The methyl group of m(6)t(6)A37 may improve the efficiency of the tRNA decoding ability. May bind to tRNA. This Rattus norvegicus (Rat) protein is tRNA (adenine(37)-N6)-methyltransferase.